A 90-amino-acid polypeptide reads, in one-letter code: Progonadoliberin-3 (90 aa).

Residues 1 to 23 (MEAGSRVIMQVLLLALVVQVTLS) form the signal peptide. Glutamine 24 bears the Pyrrolidone carboxylic acid mark. Residue glycine 33 is modified to Glycine amide.

This sequence belongs to the GnRH family. In terms of tissue distribution, expressed only in the terminal nerve nucleus of the telencephalon.

Its subcellular location is the secreted. Stimulates the secretion of gonadotropins. The polypeptide is Progonadoliberin-3 (gnrh3) (Haplochromis burtoni (Burton's mouthbrooder)).